A 351-amino-acid chain; its full sequence is MGNLFMLWAALGICCAAFSASAWSVNNFLITGPKAYLTYTTSVALGAQSGIEECKFQFAWERWNCPENALQLSTHNRLRSATRETSFIHAISSAGVMYIITKNCSMGDFENCGCDGSNNGKTGGHGWIWGGCSDNVEFGERISKLFVDSLEKGKDARALMNLHNNRAGRLAVRATMKRTCKCHGISGSCSIQTCWLQLAEFREMGDYLKAKYDQALKIEMDKRQLRAGNSAEGHWVPAEAFLPSAEAELIFLEESPDYCTCNSSLGIYGTEGRECLQNSHNTSRWERRSCGRLCTECGLQVEERKTEVISSCNCKFQWCCTVKCDQCRHVVSKYYCARSPGSAQSLGKGSA.

Residues 1–24 form the signal peptide; it reads MGNLFMLWAALGICCAAFSASAWS. Cys-54 and Cys-65 are disulfide-bonded. An N-linked (GlcNAc...) asparagine glycan is attached at Asn-103. 10 disulfide bridges follow: Cys-104/Cys-112, Cys-114/Cys-132, Cys-180/Cys-194, Cys-182/Cys-189, Cys-259/Cys-297, Cys-275/Cys-290, Cys-294/Cys-336, Cys-312/Cys-327, Cys-314/Cys-324, and Cys-319/Cys-320. Residue Ser-186 is the site of O-palmitoleoyl serine attachment. N-linked (GlcNAc...) asparagine glycosylation is found at Asn-262 and Asn-281.

Belongs to the Wnt family. Forms a soluble 1:1 complex with AFM; this prevents oligomerization and is required for prolonged biological activity. The complex with AFM may represent the physiological form in body fluids. In terms of processing, palmitoleoylation is required for efficient binding to frizzled receptors. Depalmitoleoylation leads to Wnt signaling pathway inhibition. Proteolytic processing by TIKI1 and TIKI2 promotes oxidation and formation of large disulfide-bond oligomers, leading to inactivation of WNT8A.

The protein resides in the secreted. It localises to the extracellular space. Its subcellular location is the extracellular matrix. Ligand for members of the frizzled family of seven transmembrane receptors. Plays a role in embryonic patterning. This is Protein Wnt-8a (WNT8A) from Homo sapiens (Human).